The following is a 492-amino-acid chain: GTPase Der (492 aa).

EngA-type G domains lie at 3–166 (PVVA…VDEV) and 205–378 (IKLA…DSAT). GTP is bound by residues 9–16 (GRPNVGKS), 56–60 (DTGGI), 118–121 (NKTD), 211–218 (GRPNVGKS), 258–262 (DTAGV), and 323–326 (NKWD). The 85-residue stretch at 379-463 (RRVSTAMLTR…PIRIQFKEGE (85 aa)) folds into the KH-like domain.

This sequence belongs to the TRAFAC class TrmE-Era-EngA-EngB-Septin-like GTPase superfamily. EngA (Der) GTPase family. As to quaternary structure, associates with the 50S ribosomal subunit.

In terms of biological role, GTPase that plays an essential role in the late steps of ribosome biogenesis. In Klebsiella pneumoniae subsp. pneumoniae (strain ATCC 700721 / MGH 78578), this protein is GTPase Der.